Here is a 100-residue protein sequence, read N- to C-terminus: MHSIVALMLIGTILPIAALHQKHQGFILSSSDSTGNQPMDAISRADRHTNYRSCALRLIPHVWSVCGDACQPQNGIDVAQKCCSTDCSSDYIKEICCPFD.

The N-terminal stretch at 1 to 18 (MHSIVALMLIGTILPIAA) is a signal peptide. Disulfide bonds link Cys54/Cys83, Cys66/Cys96, Cys70/Cys97, and Cys82/Cys87.

It belongs to the insulin family.

The protein localises to the secreted. This chain is Putative insulin-like peptide beta-type 6 (ins-5), found in Caenorhabditis elegans.